The following is a 181-amino-acid chain: Prepronociceptin (181 aa).

Residues Met-1–Ser-19 form the signal peptide. The propeptide occupies Ser-20–Leu-95. The segment at Ser-103–Glu-125 is disordered. 2 tandem repeats follow at residues Asp-109–Ala-114 and Asp-115–Ala-120. A 2 X 6 AA tandem repeats of D-A-E-P-X-A region spans residues Asp-109–Ala-120. Positions Pro-112 to Glu-125 are enriched in acidic residues. A propeptide spanning residues Thr-174–Val-181 is cleaved from the precursor.

The protein belongs to the opioid neuropeptide precursor family. In terms of processing, specific enzymatic cleavages at paired basic residues probably yield other active peptides besides nociceptin. Post-translationally, the N-terminal domain contains 6 conserved cysteines thought to be involved in disulfide bonding and/or processing. Expressed predominantly in the spinal cord and brain, being more abundant in the hypothalamus and striatum. Also found in small amounts in ovary.

It is found in the secreted. Ligand of the opioid receptor-like receptor OPRL1. It may act as a transmitter in the brain by modulating nociceptive and locomotor behavior. May be involved in neuronal differentiation and development. Functionally, blocks nociceptin action in pain transmission by inhibiting nociceptin-induced hyperalgesia and allodynia. In terms of biological role, has potent analgesic activity. The chain is Prepronociceptin (Pnoc) from Rattus norvegicus (Rat).